Here is a 350-residue protein sequence, read N- to C-terminus: LysM domain-containing GPI-anchored protein 2 (350 aa).

A signal peptide spans 1-23 (METSCFTLLGLLVSLSFFLTLSA). N-linked (GlcNAc...) asparagine glycosylation is found at N30, N48, N76, and N99. Intrachain disulfides connect C31–C97, C38–C161, C95–C159, and C97–C161. 2 LysM domains span residues 108 to 155 (IEYT…KFWI) and 172 to 216 (YAHV…PLDV). Chitin-binding positions include 114 to 120 (KDDILSF) and 142 to 149 (PDPNKIEI). Residues N193, N238, N258, N289, and N305 are each glycosylated (N-linked (GlcNAc...) asparagine). 2 disulfide bridges follow: C221–C253 and C248–C277. Residue D318 is the site of GPI-anchor amidated aspartate attachment. A propeptide spans 319 to 350 (SAGPDNYASTLSSSFNFVIVLIQCALLCLCLL) (removed in mature form).

In terms of assembly, forms homooligomers. Interacts with CERK1. Binds to chitin oligosaccharide elicitor.

The protein localises to the cell membrane. Chitin elicitor-binding protein involved in the perception of chitin oligosaccharide elicitor. The protein is LysM domain-containing GPI-anchored protein 2 (LYM2) of Arabidopsis thaliana (Mouse-ear cress).